The sequence spans 407 residues: Peptidase T (407 aa).

H82 is a Zn(2+) binding site. The active site involves D84. D143 is a Zn(2+) binding site. Catalysis depends on E177, which acts as the Proton acceptor. Zn(2+)-binding residues include E178, D200, and H382.

It belongs to the peptidase M20B family. The cofactor is Zn(2+).

Its subcellular location is the cytoplasm. The enzyme catalyses Release of the N-terminal residue from a tripeptide.. Cleaves the N-terminal amino acid of tripeptides. The protein is Peptidase T of Streptococcus pyogenes serotype M6 (strain ATCC BAA-946 / MGAS10394).